Consider the following 1377-residue polypeptide: Protein RhsA (1377 aa).

28 repeat units span residues 330 to 352 (GKQV…HRHT), 353 to 374 (GRPE…LNPA), 375 to 417 (GLSY…EHAD), 418 to 438 (GSVT…TDAA), 439 to 460 (GRTT…TTPD), 461 to 481 (GRAS…TGPD), 482 to 502 (GLEL…TAPD), 503 to 525 (GDIT…EDAT), 526 to 546 (GSRK…TDCS), 547 to 567 (GYVT…HREE), 568 to 588 (GLSQ…KDTQ), 589 to 609 (GHET…IAPD), 610 to 629 (GSRN…TTQG), 630 to 650 (GLTR…TSEN), 651 to 671 (GSHT…TGFD), 672 to 691 (GRTQ…SEDE), 692 to 711 (GLVT…RTVK), 712 to 734 (GETA…HISE), 735 to 758 (GHRV…QTVH), 808 to 828 (GDTP…LRSF), 829 to 850 (GRYE…HLNS), 851 to 871 (LLSD…ISSP), 872 to 894 (RQTR…TAAN), 895 to 930 (LDIR…NRIA), 931 to 959 (RDAH…VIRT), 960 to 984 (DDER…TQYE), 985 to 1019 (EPLV…MSLS), and 1162 to 1186 (GTTE…HQLQ). The interval 330–1186 (GKQVRSFTYD…LNEENPHQLQ (857 aa)) is 28 X approximate tandem repeats. A disordered region spans residues 1356 to 1377 (DAKSTQKAWNCRHSRQSNDKKR).

The protein belongs to the RHS family.

Its function is as follows. Rhs elements have a nonessential function. They may play an important role in the natural ecology of the cell. In Escherichia coli (strain K12), this protein is Protein RhsA (rhsA).